The sequence spans 344 residues: Anthranilate phosphoribosyltransferase (344 aa).

Residues Gly84, 87–88 (GD), Thr92, 94–97 (NIST), 112–120 (KHGNRSVSS), and Ser124 each bind 5-phospho-alpha-D-ribose 1-diphosphate. Gly84 is a binding site for anthranilate. Ser96 lines the Mg(2+) pocket. Asn115 lines the anthranilate pocket. Arg170 is a binding site for anthranilate. Mg(2+) is bound by residues Asp229 and Glu230.

This sequence belongs to the anthranilate phosphoribosyltransferase family. In terms of assembly, homodimer. Mg(2+) serves as cofactor.

It catalyses the reaction N-(5-phospho-beta-D-ribosyl)anthranilate + diphosphate = 5-phospho-alpha-D-ribose 1-diphosphate + anthranilate. The protein operates within amino-acid biosynthesis; L-tryptophan biosynthesis; L-tryptophan from chorismate: step 2/5. Functionally, catalyzes the transfer of the phosphoribosyl group of 5-phosphorylribose-1-pyrophosphate (PRPP) to anthranilate to yield N-(5'-phosphoribosyl)-anthranilate (PRA). This is Anthranilate phosphoribosyltransferase from Xylella fastidiosa (strain 9a5c).